The following is a 562-amino-acid chain: Formate--tetrahydrofolate ligase (562 aa).

An ATP-binding site is contributed by 71–78 (TPAGEGKS).

Belongs to the formate--tetrahydrofolate ligase family.

It carries out the reaction (6S)-5,6,7,8-tetrahydrofolate + formate + ATP = (6R)-10-formyltetrahydrofolate + ADP + phosphate. The protein operates within one-carbon metabolism; tetrahydrofolate interconversion. The protein is Formate--tetrahydrofolate ligase of Bacillus anthracis (strain A0248).